Reading from the N-terminus, the 495-residue chain is MVSEITHKSYPLHFVLFPFMAQGHMIPMVDIARLLAQRGVKITIVTTPHNAARFKNVLSRAIESGLPISIVQVKLPSQEAGLPEGNETLDSLVSMELMIHFLKAVNMLEEPVQKLFEEMSPQPSCIISDFCLPYTSKIAKKFNIPKILFHGMCCFCLLCMHILRKNREIVENLKSDKEHFVVPYFPDRVEFTRPQVPVATYVPGDWHEITEDMVEADKTSYGVIVNTYQELEPAYANDYKEARSGKAWTIGPVSLCNKVGADKAERGNKADIDQDECLKWLNSKEEGSVLYVCLGSICNLPLSQLKELGLGLEESQRPFIWVIRGWEKNKELHEWFSESGFEERIKDRGLLIKGWAPQMLILSHHSVGGFLTHCGWNSTLEGLTAGLPLLTWPLFADQFCNEKLAVQVLKAGVSAGVDQPMKWGEEEKIGVLVDKEGVKKAVEELMGESDDAKEIRRRAKELGELAHKAVEEGGSSHSNITSLLEDIMQLAQSNN.

The active-site Proton acceptor is the His24. Residue His24 participates in an anthocyanidin binding. Asp129 acts as the Charge relay in catalysis. Residues Ala356, Gln358, His373, Trp376, Asn377, Ser378, and Glu381 each coordinate UDP-alpha-D-glucose. Ala396 serves as a coordination point for an anthocyanidin. 2 residues coordinate UDP-alpha-D-glucose: Asp397 and Gln398.

Belongs to the UDP-glycosyltransferase family.

It catalyses the reaction oleanolate + UDP-alpha-D-glucose = oleanolate 3-O-beta-D-glucoside + UDP + H(+). Functionally, catalyzes the transfer of a glucose (Glc) moiety from UDP-Glc to the C-3 position of the oleanane sapogenins oleanolate and hederagenin, and to the C-28 carboxylic group of the lupane sapogenin betulinate. The monoglucosylated hederagenin 3-O-beta-D-glucoside is a feeding deterrent of the yellow-striped flea beetle (Phyllotreta nemorum). This chain is UDP-glycosyltransferase 73C12, found in Barbarea vulgaris (Yellow rocket).